The following is a 65-amino-acid chain: Protein YSY6 (65 aa).

The chain crosses the membrane as a helical span at residues 45 to 65; it reads LGILLFLLVGGGVLQLISYIL.

This sequence belongs to the RAMP4 family.

Its subcellular location is the membrane. The protein localises to the endoplasmic reticulum membrane. Functionally, interacts with target proteins during their translocation into the lumen of the endoplasmic reticulum. Protects unfolded target proteins against degradation during ER stress. May facilitate glycosylation of target proteins after termination of ER stress. This is Protein YSY6 (YSY6) from Saccharomyces cerevisiae (strain ATCC 204508 / S288c) (Baker's yeast).